We begin with the raw amino-acid sequence, 402 residues long: MSRVSQARNLGKYFLLVDNMLVVLGFFVVFPLISIRFVDQMGWAALMVGIALGLRQFVQQGLGVFGGAIADRFGAKPMIVTGMLLRAAGFATMGIAHDPWLLWFSCFLSGLGGTLFDPPRTALVVKLIRPRQRGRFFSLLMMQDSAGAVIGALLGSWLLQYDFRLVCATGAALFILCAAFNAWLLPAWKLSTVKAPVREGLGRVMADKRFVTYVLTLTGYYMLAVQVMLMLPIMVNDIAGSPAAVKWMYAIEACLSLTLLYPIARWSEKRFRLEHRLMAGLLVMTLSMMPIGLVSSVQQLFVLICTFYIGSIIAEPARETLGAGLADPRARGSYMGFSRLGLALGGALGYAGGGWLFDSGKAMNQSELPWVMLGVVGFITLIALWWQFSPKRSASGMLEPGA.

The next 11 helical transmembrane spans lie at 13–33 (YFLLVDNMLVVLGFFVVFPLI), 34–54 (SIRFVDQMGWAALMVGIALGL), 99–116 (PWLLWFSCFLSGLGGTLF), 139–159 (LLMMQDSAGAVIGALLGSWLL), 165–185 (LVCATGAALFILCAAFNAWLL), 214–234 (VLTLTGYYMLAVQVMLMLPIM), 243–263 (AAVKWMYAIEACLSLTLLYPI), 277–297 (LMAGLLVMTLSMMPIGLVSSV), 300–320 (LFVLICTFYIGSIIAEPARET), 340–360 (LGLALGGALGYAGGGWLFDSG), and 368–388 (LPWVMLGVVGFITLIALWWQF).

This sequence belongs to the major facilitator superfamily. DHA1 family. MdtH (TC 2.A.1.2.21) subfamily.

Its subcellular location is the cell inner membrane. This is Multidrug resistance protein MdtH from Enterobacter sp. (strain 638).